The sequence spans 163 residues: Centrosomal protein of 19 kDa (163 aa).

The protein belongs to the CEP19 family. As to quaternary structure, interacts with CEP43; this interaction is required for its localization to the mother centriole. Interacts (via residues 121-150) with RABL2B. Interacts (via C-terminus) with CEP350; this interaction is required for its localization to the mother centriole.

It localises to the cytoplasm. The protein resides in the cytoskeleton. The protein localises to the microtubule organizing center. It is found in the centrosome. Its subcellular location is the centriole. It localises to the spindle pole. The protein resides in the cilium basal body. In terms of biological role, required for ciliation. Recruits the RABL2B GTPase to the ciliary base to initiate ciliation. After specifically capturing the activated GTP-bound RABL2B, the CEP19-RABL2B complex binds intraflagellar transport (IFT) complex B from the large pool pre-docked at the base of the cilium and thus triggers its entry into the cilia. Involved in the early steps in cilia formation by recruiting the ciliary vesicles (CVs) to the distal end of the mother centriole where they fuse to initiate cilium assembly. Involved in microtubule (MT) anchoring to the centrosomes. In Homo sapiens (Human), this protein is Centrosomal protein of 19 kDa (CEP19).